Consider the following 286-residue polypeptide: Energy-coupling factor transporter ATP-binding protein EcfA2 (286 aa).

The ABC transporter domain maps to 3 to 244 (IKVENVSFIY…AERLEKIGLS (242 aa)). An ATP-binding site is contributed by 40–47 (GHTGSGKS).

The protein belongs to the ABC transporter superfamily. Energy-coupling factor EcfA family. In terms of assembly, forms a stable energy-coupling factor (ECF) transporter complex composed of 2 membrane-embedded substrate-binding proteins (S component), 2 ATP-binding proteins (A component) and 2 transmembrane proteins (T component).

It localises to the cell membrane. Its function is as follows. ATP-binding (A) component of a common energy-coupling factor (ECF) ABC-transporter complex. Unlike classic ABC transporters this ECF transporter provides the energy necessary to transport a number of different substrates. The sequence is that of Energy-coupling factor transporter ATP-binding protein EcfA2 from Caldanaerobacter subterraneus subsp. tengcongensis (strain DSM 15242 / JCM 11007 / NBRC 100824 / MB4) (Thermoanaerobacter tengcongensis).